A 162-amino-acid chain; its full sequence is Endoribonuclease YbeY (162 aa).

Residues His117, His121, and His127 each coordinate Zn(2+).

Belongs to the endoribonuclease YbeY family. The cofactor is Zn(2+).

It localises to the cytoplasm. Its function is as follows. Single strand-specific metallo-endoribonuclease involved in late-stage 70S ribosome quality control and in maturation of the 3' terminus of the 16S rRNA. The sequence is that of Endoribonuclease YbeY from Francisella tularensis subsp. tularensis (strain WY96-3418).